The chain runs to 95 residues: UPF0235 protein Swoo_1329 (95 aa).

Belongs to the UPF0235 family.

This is UPF0235 protein Swoo_1329 from Shewanella woodyi (strain ATCC 51908 / MS32).